A 110-amino-acid polypeptide reads, in one-letter code: Phosphoribosyl-ATP pyrophosphatase (110 aa).

It belongs to the PRA-PH family.

The protein localises to the cytoplasm. The catalysed reaction is 1-(5-phospho-beta-D-ribosyl)-ATP + H2O = 1-(5-phospho-beta-D-ribosyl)-5'-AMP + diphosphate + H(+). Its pathway is amino-acid biosynthesis; L-histidine biosynthesis; L-histidine from 5-phospho-alpha-D-ribose 1-diphosphate: step 2/9. This is Phosphoribosyl-ATP pyrophosphatase from Stutzerimonas stutzeri (strain A1501) (Pseudomonas stutzeri).